The sequence spans 336 residues: Calcium-gated potassium channel MthK (336 aa).

Topologically, residues 1–20 are cytoplasmic; sequence MVLVIEIIRKHLPRVLKVPA. The chain crosses the membrane as a helical span at residues 21 to 41; it reads TRILLLVLAVIIYGTAGFHFI. Residues 42–48 are Extracellular-facing; the sequence is EGESWTV. The helical; Pore-forming intramembrane region spans 49–58; that stretch reads SLYWTFVTIA. The segment at residues 59-64 is an intramembrane region (pore-forming); the sequence is TVGYGD. Positions 59-64 match the Selectivity filter motif; that stretch reads TVGYGD. Residues 65-69 lie on the Extracellular side of the membrane; the sequence is YSPST. A helical membrane pass occupies residues 70–95; that stretch reads PLGMYFTVTLIVLGIGTFAVAVERLL. At 96–106 the chain is on the cytoplasmic side; the sequence is EFLINREQMKL. An RCK N-terminal domain is found at 115–230; the sequence is SRHVVICGWS…RMAGADQVIS (116 aa). Asp184, Glu210, and Glu212 together coordinate Ca(2+). Positions 252 to 336 constitute an RCK C-terminal domain; the sequence is VQDVLAEEST…IERLKNYISA (85 aa).

As to quaternary structure, homotetramer.

Its subcellular location is the cell membrane. Functionally, calcium-gated potassium channel. This Methanothermobacter thermautotrophicus (strain ATCC 29096 / DSM 1053 / JCM 10044 / NBRC 100330 / Delta H) (Methanobacterium thermoautotrophicum) protein is Calcium-gated potassium channel MthK (mthK).